An 802-amino-acid chain; its full sequence is Copper-exporting P-type ATPase (802 aa).

HMA domains lie at 5–70 (KKTT…YGVA) and 72–138 (ETVE…YDAS). Residues Cys16, Cys19, Cys83, and Cys86 each contribute to the Cu(+) site. Helical transmembrane passes span 161–181 (LIIS…HLFN), 192–212 (WFQF…FYVG), 224–244 (MDVL…YEMV), 256–276 (LYFE…YLEA), 411–431 (YFVP…ITLV), and 438–458 (PALV…LGLA). Residue Asp495 is the 4-aspartylphosphate intermediate of the active site. Mg(2+) is bound by residues Asp690 and Asp694. 2 helical membrane passes run 748–767 (LFWA…LGLL) and 771–790 (VAGA…ALRL).

The protein belongs to the cation transport ATPase (P-type) (TC 3.A.3) family. Type IB subfamily.

The protein localises to the cell membrane. It catalyses the reaction Cu(+)(in) + ATP + H2O = Cu(+)(out) + ADP + phosphate + H(+). Functionally, involved in copper export. This Staphylococcus aureus (strain MW2) protein is Copper-exporting P-type ATPase (copA).